The sequence spans 194 residues: Peptidyl-tRNA hydrolase (194 aa).

Residue Tyr16 participates in tRNA binding. The Proton acceptor role is filled by His21. Residues Phe67, Asn69, and Asn115 each contribute to the tRNA site.

It belongs to the PTH family. In terms of assembly, monomer.

It is found in the cytoplasm. The catalysed reaction is an N-acyl-L-alpha-aminoacyl-tRNA + H2O = an N-acyl-L-amino acid + a tRNA + H(+). Functionally, hydrolyzes ribosome-free peptidyl-tRNAs (with 1 or more amino acids incorporated), which drop off the ribosome during protein synthesis, or as a result of ribosome stalling. In terms of biological role, catalyzes the release of premature peptidyl moieties from peptidyl-tRNA molecules trapped in stalled 50S ribosomal subunits, and thus maintains levels of free tRNAs and 50S ribosomes. This Klebsiella pneumoniae (strain 342) protein is Peptidyl-tRNA hydrolase.